The chain runs to 138 residues: MQQTTVANHSLFPTLPPEFLPLALYTVAATVLIGVLLLAAWWLGAKTTNRNKELPYESGVIPTGSARLAYPVPFYLIAIFFIVFDVEAAFIFAWATAWRELGLAGLIHITFFIVILLLGLVWLWMKGGLDWGPSRERR.

3 helical membrane-spanning segments follow: residues 19–39, 74–94, and 103–123; these read FLPL…LLLA, FYLI…IFAW, and LAGL…LVWL.

This sequence belongs to the complex I subunit 3 family. As to quaternary structure, NDH-1 is composed of 14 different subunits. Subunits NuoA, H, J, K, L, M, N constitute the membrane sector of the complex.

Its subcellular location is the cell inner membrane. It carries out the reaction a quinone + NADH + 5 H(+)(in) = a quinol + NAD(+) + 4 H(+)(out). In terms of biological role, NDH-1 shuttles electrons from NADH, via FMN and iron-sulfur (Fe-S) centers, to quinones in the respiratory chain. The immediate electron acceptor for the enzyme in this species is believed to be ubiquinone. Couples the redox reaction to proton translocation (for every two electrons transferred, four hydrogen ions are translocated across the cytoplasmic membrane), and thus conserves the redox energy in a proton gradient. The protein is NADH-quinone oxidoreductase subunit A 1 of Geobacter metallireducens (strain ATCC 53774 / DSM 7210 / GS-15).